We begin with the raw amino-acid sequence, 263 residues long: Fructose-bisphosphate aldolase class 1 (263 aa).

The Schiff-base intermediate with dihydroxyacetone-P role is filled by lysine 177.

The protein belongs to the DeoC/FbaB aldolase family.

It carries out the reaction beta-D-fructose 1,6-bisphosphate = D-glyceraldehyde 3-phosphate + dihydroxyacetone phosphate. Functionally, has aldolase activity with fructose 1,6-bisphosphate. May play a role in the biosynthesis of aromatic amino acids (AroAA). The chain is Fructose-bisphosphate aldolase class 1 (fba1) from Halobacterium salinarum (strain ATCC 29341 / DSM 671 / R1).